The chain runs to 178 residues: Large ribosomal subunit protein uL6 (178 aa).

It belongs to the universal ribosomal protein uL6 family. As to quaternary structure, part of the 50S ribosomal subunit.

In terms of biological role, this protein binds to the 23S rRNA, and is important in its secondary structure. It is located near the subunit interface in the base of the L7/L12 stalk, and near the tRNA binding site of the peptidyltransferase center. The chain is Large ribosomal subunit protein uL6 from Corynebacterium urealyticum (strain ATCC 43042 / DSM 7109).